Here is a 323-residue protein sequence, read N- to C-terminus: Methionyl-tRNA formyltransferase (323 aa).

(6S)-5,6,7,8-tetrahydrofolate is bound at residue 113 to 116 (SLLP).

It belongs to the Fmt family.

The catalysed reaction is L-methionyl-tRNA(fMet) + (6R)-10-formyltetrahydrofolate = N-formyl-L-methionyl-tRNA(fMet) + (6S)-5,6,7,8-tetrahydrofolate + H(+). Its function is as follows. Attaches a formyl group to the free amino group of methionyl-tRNA(fMet). The formyl group appears to play a dual role in the initiator identity of N-formylmethionyl-tRNA by promoting its recognition by IF2 and preventing the misappropriation of this tRNA by the elongation apparatus. The polypeptide is Methionyl-tRNA formyltransferase (Porphyromonas gingivalis (strain ATCC BAA-308 / W83)).